The primary structure comprises 530 residues: GMP synthase [glutamine-hydrolyzing] (530 aa).

One can recognise a Glutamine amidotransferase type-1 domain in the interval 18–207 (TILVLDFGSQ…AVDICQAKTN (190 aa)). Cys94 (nucleophile) is an active-site residue. Residues His181 and Glu183 contribute to the active site. Positions 208-405 (WSMENFIDTE…LGVPEDLVWR (198 aa)) constitute a GMPS ATP-PPase domain. 236-242 (SGGVDST) is an ATP binding site. Positions 309, 467, 522, and 528 each coordinate XMP.

In terms of assembly, homodimer. Requires Mg(2+) as cofactor.

The protein resides in the cytoplasm. It is found in the cytosol. It carries out the reaction XMP + L-glutamine + ATP + H2O = GMP + L-glutamate + AMP + diphosphate + 2 H(+). Its pathway is purine metabolism; GMP biosynthesis; GMP from XMP (L-Gln route): step 1/1. In terms of biological role, catalyzes the conversion of xanthine monophosphate (XMP) to GMP in the presence of glutamine and ATP through an adenyl-XMP intermediate. This chain is GMP synthase [glutamine-hydrolyzing] (GUA1), found in Candida albicans (strain SC5314 / ATCC MYA-2876) (Yeast).